We begin with the raw amino-acid sequence, 115 residues long: MDDMSLKKGKEFEERASKFLKKQGYKILARNVRYSFGELDIVARKGKTLVFVEVKGGNPDFPPRMRVDRAKLRRLELAAYKYIKDFSPKFEESRLDVIEVLSNGEINHLKGVGRW.

The protein belongs to the UPF0102 family.

The protein is UPF0102 protein Kole_1919 of Kosmotoga olearia (strain ATCC BAA-1733 / DSM 21960 / TBF 19.5.1).